We begin with the raw amino-acid sequence, 994 residues long: Phosphoenolpyruvate carboxylase (994 aa).

The disordered stretch occupies residues 1 to 66 (MKSSGSARAT…QGRTREDKDR (66 aa)). 2 stretches are compositionally biased toward low complexity: residues 14–25 (AVSSSSAPAHAE) and 41–54 (AAAR…AASA). Active-site residues include His-204 and Lys-646.

The protein belongs to the PEPCase type 1 family. The cofactor is Mg(2+).

It catalyses the reaction oxaloacetate + phosphate = phosphoenolpyruvate + hydrogencarbonate. In terms of biological role, forms oxaloacetate, a four-carbon dicarboxylic acid source for the tricarboxylic acid cycle. This Burkholderia pseudomallei (strain 668) protein is Phosphoenolpyruvate carboxylase.